A 949-amino-acid polypeptide reads, in one-letter code: Protein translocase subunit SecA (949 aa).

Residues Gln-87, 105–109 (GEGKT), and Asp-524 each bind ATP. 2 disordered regions span residues 852–876 (PPPG…SSGG) and 896–939 (LEFS…GSGK). Zn(2+) contacts are provided by Cys-933, Cys-935, Cys-944, and His-945.

This sequence belongs to the SecA family. In terms of assembly, monomer and homodimer. Part of the essential Sec protein translocation apparatus which comprises SecA, SecYEG and auxiliary proteins SecDF-YajC and YidC. It depends on Zn(2+) as a cofactor.

Its subcellular location is the cell inner membrane. The protein localises to the cytoplasm. It carries out the reaction ATP + H2O + cellular proteinSide 1 = ADP + phosphate + cellular proteinSide 2.. In terms of biological role, part of the Sec protein translocase complex. Interacts with the SecYEG preprotein conducting channel. Has a central role in coupling the hydrolysis of ATP to the transfer of proteins into and across the cell membrane, serving both as a receptor for the preprotein-SecB complex and as an ATP-driven molecular motor driving the stepwise translocation of polypeptide chains across the membrane. This is Protein translocase subunit SecA from Methylocella silvestris (strain DSM 15510 / CIP 108128 / LMG 27833 / NCIMB 13906 / BL2).